Reading from the N-terminus, the 332-residue chain is Phosphate acyltransferase (332 aa).

Belongs to the PlsX family. Homodimer. Probably interacts with PlsY.

It is found in the cytoplasm. The enzyme catalyses a fatty acyl-[ACP] + phosphate = an acyl phosphate + holo-[ACP]. The protein operates within lipid metabolism; phospholipid metabolism. Catalyzes the reversible formation of acyl-phosphate (acyl-PO(4)) from acyl-[acyl-carrier-protein] (acyl-ACP). This enzyme utilizes acyl-ACP as fatty acyl donor, but not acyl-CoA. This chain is Phosphate acyltransferase, found in Clostridium novyi (strain NT).